Consider the following 147-residue polypeptide: SPI-1 type 3 secretion system pilotin (147 aa).

Residues 1-15 form the signal peptide; it reads MKKFYSCLPVFLLIG. A lipid anchor (N-palmitoyl cysteine) is attached at cysteine 16. Cysteine 16 is lipidated: S-diacylglycerol cysteine.

It belongs to the InvH family.

It localises to the cell outer membrane. Functionally, involved in the synthesis of the type III secretion system (T3SS), also called injectisome, which is used to inject bacterial effector proteins into eukaryotic host cells. Pilot protein that is required for the proper localization of the secretin InvG/SctC in the outer membrane. Necessary for efficient adherence and entry of these organisms into cultured epithelial cells. This chain is SPI-1 type 3 secretion system pilotin, found in Salmonella typhimurium (strain SL1344).